We begin with the raw amino-acid sequence, 152 residues long: 3-hydroxyacyl-[acyl-carrier-protein] dehydratase FabZ (152 aa).

His58 is a catalytic residue.

The protein belongs to the thioester dehydratase family. FabZ subfamily.

The protein resides in the cytoplasm. The catalysed reaction is a (3R)-hydroxyacyl-[ACP] = a (2E)-enoyl-[ACP] + H2O. In terms of biological role, involved in unsaturated fatty acids biosynthesis. Catalyzes the dehydration of short chain beta-hydroxyacyl-ACPs and long chain saturated and unsaturated beta-hydroxyacyl-ACPs. The protein is 3-hydroxyacyl-[acyl-carrier-protein] dehydratase FabZ of Prochlorococcus marinus (strain MIT 9301).